Consider the following 641-residue polypeptide: WW domain-binding protein 11 (641 aa).

Polar residues predominate over residues Met-1 to Ser-11. The disordered stretch occupies residues Met-1–Arg-37. Residues Met-1–Leu-45 are required for nuclear import. Lys-13 is subject to N6-acetyllysine. Positions Arg-28–Arg-37 are enriched in basic residues. Positions Glu-75–His-133 form a coiled coil. Phosphoserine is present on Ser-181. The tract at residues Leu-186–Gln-213 is disordered. Omega-N-methylarginine is present on Arg-192. The segment covering Arg-192–Gln-210 has biased composition (pro residues). Residues Arg-217–Phe-221 are interaction with PP1. The residue at position 236 (Tyr-236) is a Phosphotyrosine. Residues Tyr-236 to Ala-549 form a disordered region. Ser-237 is subject to Phosphoserine. Over residues Ser-253–Asp-263 the composition is skewed to acidic residues. A compositionally biased stretch (basic and acidic residues) spans Thr-276–Ser-304. Residues Ser-279 and Ser-283 each carry the phosphoserine modification. An interaction with PP1 region spans residues Leu-306–Phe-310. Over residues Glu-351–Glu-365 the composition is skewed to acidic residues. Phosphoserine occurs at positions 353, 361, and 364. Residues Ala-366 to Ala-380 show a composition bias toward basic and acidic residues. Positions Asp-381–Ala-404 are enriched in low complexity. Pro residues-rich tracts occupy residues Pro-405–Met-447, Arg-456–Pro-504, and Pro-510–Asn-530. Residues Pro-455–Arg-466 carry the PGR motif. A Glycyl lysine isopeptide (Lys-Gly) (interchain with G-Cter in SUMO2) cross-link involves residue Lys-557. An N6-acetyllysine modification is found at Lys-565. Lys-572 is covalently cross-linked (Glycyl lysine isopeptide (Lys-Gly) (interchain with G-Cter in SUMO2)). A disordered region spans residues Glu-588 to Val-623. At Ser-600 the chain carries Phosphoserine.

As to quaternary structure, interacts with PPP1CA, PPP1CB and PPP1CC. Interacts via the PGR motif with PQBP1 in the nucleus. Interacts with the WW domains of WBP4.

The protein resides in the nucleus. It is found in the cytoplasm. Its function is as follows. Activates pre-mRNA splicing. May inhibit PP1 phosphatase activity. This Rattus norvegicus (Rat) protein is WW domain-binding protein 11 (Wbp11).